Consider the following 902-residue polypeptide: Glutamate receptor 4 (902 aa).

The N-terminal stretch at 1–20 is a signal peptide; the sequence is MRIICRQIVLLFSGFWGLAM. Over 22–544 the chain is Extracellular; it reads AFPSSVQIGG…GVFSFLDPLA (523 aa). Asn52, Asn56, Asn258, Asn371, Asn407, and Asn414 each carry an N-linked (GlcNAc...) asparagine glycan. A disulfide bond links Cys84 and Cys331. Residues Pro500, Thr502, and Arg507 each coordinate L-glutamate. Residues 545-565 traverse the membrane as a helical segment; that stretch reads YEIWMCIVFAYIGVSVVLFLV. Residues 566-592 are Cytoplasmic-facing; the sequence is SRFSPYEWHTEEPEDGKEGPSDQPPNE. Residues 593 to 608 constitute an intramembrane region (helical; Pore-forming); that stretch reads FGIFNSLWFSLGAFMQ. An intramembrane segment occupies 609–611; the sequence is QGC. Cys611 carries S-palmitoyl cysteine lipidation. Over 612–617 the chain is Cytoplasmic; that stretch reads DISPRS. The helical transmembrane segment at 618–638 threads the bilayer; sequence LSGRIVGGVWWFFTLIIISSY. Topologically, residues 639-813 are extracellular; that stretch reads TANLAAFLTV…DKTSALSLSN (175 aa). Positions 676, 677, and 727 each coordinate L-glutamate. Cysteines 740 and 795 form a disulfide. The chain crosses the membrane as a helical span at residues 814–834; the sequence is VAGVFYILVGGLGLAMLVALI. Residues 835–902 are Cytoplasmic-facing; sequence EFCYKSRAEA…GLAVIASDLP (68 aa). A lipid anchor (S-palmitoyl cysteine) is attached at Cys837. Ser862 carries the post-translational modification Phosphoserine.

It belongs to the glutamate-gated ion channel (TC 1.A.10.1) family. GRIA4 subfamily. In terms of assembly, homotetramer or heterotetramer of pore-forming glutamate receptor subunits. Tetramers may be formed by the dimerization of dimers. Interacts with EPB41L1 via its C-terminus. Isoform 3 interacts with PICK1. Found in a complex with GRIA1, GRIA2, GRIA3, CNIH2, CNIH3, CACNG2, CACNG3, CACNG4, CACNG5, CACNG7 and CACNG8. Interacts with CACNG5 and PRKCG. Found in a complex with GRIA1, GRIA2, GRIA3, DLG4, CACNG8 and CNIH2. Post-translationally, palmitoylated. Depalmitoylated upon L-glutamate stimulation. ZDHHC3/GODZ specifically palmitoylates Cys-611, which leads to Golgi retention and decreased cell surface expression. In contrast, Cys-837 palmitoylation does not affect cell surface expression but regulates stimulation-dependent endocytosis. In terms of processing, phosphorylated at Ser-862 by PRKCG; phosphorylation increases plasma membrane-associated GRI4 expression.

The protein resides in the cell membrane. It is found in the postsynaptic cell membrane. It localises to the cell projection. The protein localises to the dendrite. The enzyme catalyses Ca(2+)(in) = Ca(2+)(out). It catalyses the reaction Na(+)(in) = Na(+)(out). It carries out the reaction Mg(2+)(in) = Mg(2+)(out). Ionotropic glutamate receptor that functions as a ligand-gated cation channel, gated by L-glutamate and glutamatergic agonists such as alpha-amino-3-hydroxy-5-methyl-4-isoxazolepropionic acid (AMPA), quisqualic acid, and kainic acid. L-glutamate acts as an excitatory neurotransmitter at many synapses in the central nervous system and plays an important role in fast excitatory synaptic transmission. Binding of the excitatory neurotransmitter L-glutamate induces a conformation change, leading to the opening of the cation channel, and thereby converts the chemical signal to an electrical impulse upon entry of monovalent and divalent cations such as sodium and calcium. The receptor then desensitizes rapidly and enters a transient inactive state, characterized by the presence of bound agonist. In the presence of CACNG8, shows resensitization which is characterized by a delayed accumulation of current flux upon continued application of L-glutamate. This is Glutamate receptor 4 from Mus musculus (Mouse).